We begin with the raw amino-acid sequence, 96 residues long: Large ribosomal subunit protein uL23 (96 aa).

Belongs to the universal ribosomal protein uL23 family. In terms of assembly, part of the 50S ribosomal subunit. Contacts protein L29, and trigger factor when it is bound to the ribosome.

In terms of biological role, one of the early assembly proteins it binds 23S rRNA. One of the proteins that surrounds the polypeptide exit tunnel on the outside of the ribosome. Forms the main docking site for trigger factor binding to the ribosome. In Ruthia magnifica subsp. Calyptogena magnifica, this protein is Large ribosomal subunit protein uL23.